The following is a 206-amino-acid chain: Large ribosomal subunit protein uL4 (206 aa).

The disordered stretch occupies residues 55–80 (AFVSGGGAKPWRQKGTGRARSGSNRS).

This sequence belongs to the universal ribosomal protein uL4 family. Part of the 50S ribosomal subunit.

Its function is as follows. One of the primary rRNA binding proteins, this protein initially binds near the 5'-end of the 23S rRNA. It is important during the early stages of 50S assembly. It makes multiple contacts with different domains of the 23S rRNA in the assembled 50S subunit and ribosome. Forms part of the polypeptide exit tunnel. This Nitratidesulfovibrio vulgaris (strain DSM 19637 / Miyazaki F) (Desulfovibrio vulgaris) protein is Large ribosomal subunit protein uL4.